Consider the following 223-residue polypeptide: Kinetochore protein Spc25 (223 aa).

The stretch at 51-116 forms a coiled coil; sequence RHQRKVGKLQ…QRKNEIMERI (66 aa).

This sequence belongs to the SPC25 family. Component of the Ndc80 complex, which is composed of Ndc80, Nuf2 and Spc25.

It localises to the nucleus. The protein localises to the chromosome. Its subcellular location is the centromere. It is found in the kinetochore. In terms of biological role, acts as a component of the essential kinetochore-associated Ndc80 complex, which is required for chromosome segregation and spindle checkpoint activity during meiosis and mitosis. Required for kinetochore integrity and the organization of stable microtubule binding sites in the outer plate of the kinetochore. Participates in SAC signaling that responds specifically to disruptions in spindle microtubule dynamics. The NDC80 complex synergistically enhances the affinity of the SKA1 complex for microtubules and may allow the NDC80 complex to track depolymerizing microtubules. This is Kinetochore protein Spc25 from Drosophila yakuba (Fruit fly).